A 310-amino-acid chain; its full sequence is N-acetyl-gamma-glutamyl-phosphate reductase (310 aa).

C117 is a catalytic residue.

This sequence belongs to the NAGSA dehydrogenase family. Type 2 subfamily.

It is found in the cytoplasm. The enzyme catalyses N-acetyl-L-glutamate 5-semialdehyde + phosphate + NADP(+) = N-acetyl-L-glutamyl 5-phosphate + NADPH + H(+). The protein operates within amino-acid biosynthesis; L-arginine biosynthesis; N(2)-acetyl-L-ornithine from L-glutamate: step 3/4. Catalyzes the NADPH-dependent reduction of N-acetyl-5-glutamyl phosphate to yield N-acetyl-L-glutamate 5-semialdehyde. This is N-acetyl-gamma-glutamyl-phosphate reductase from Rhizobium etli (strain CIAT 652).